Here is a 101-residue protein sequence, read N- to C-terminus: DNA-binding protein Fis (101 aa).

Residues Q77–K96 constitute a DNA-binding region (H-T-H motif).

The protein belongs to the transcriptional regulatory Fis family. In terms of assembly, homodimer.

In terms of biological role, activates ribosomal RNA transcription. Plays a direct role in upstream activation of rRNA promoters. The protein is DNA-binding protein Fis of Shewanella pealeana (strain ATCC 700345 / ANG-SQ1).